The chain runs to 756 residues: Ribosomal RNA large subunit methyltransferase K/L (756 aa).

A THUMP domain is found at 46-157 (TAYRLCLWSR…RGEAILSLDL (112 aa)). A compositionally biased stretch (basic and acidic residues) spans 395 to 409 (ERRTPEQRQAEREQA). A disordered region spans residues 395-441 (ERRTPEQRQAEREQAAYDQTPNEPQERKFNKNGNPIKPTPAPAPVIE).

It belongs to the methyltransferase superfamily. RlmKL family.

The protein localises to the cytoplasm. It catalyses the reaction guanosine(2445) in 23S rRNA + S-adenosyl-L-methionine = N(2)-methylguanosine(2445) in 23S rRNA + S-adenosyl-L-homocysteine + H(+). The enzyme catalyses guanosine(2069) in 23S rRNA + S-adenosyl-L-methionine = N(2)-methylguanosine(2069) in 23S rRNA + S-adenosyl-L-homocysteine + H(+). Its function is as follows. Specifically methylates the guanine in position 2445 (m2G2445) and the guanine in position 2069 (m7G2069) of 23S rRNA. This is Ribosomal RNA large subunit methyltransferase K/L from Pseudomonas fluorescens (strain Pf0-1).